Reading from the N-terminus, the 1561-residue chain is Formin-E (1561 aa).

Residues 1-28 (MDNHSSSSNPSSLSSSSSSSSSSSSFLS) are compositionally biased toward low complexity. Disordered stretches follow at residues 1-63 (MDNH…EEKP), 77-187 (EEEE…GKLS), 211-279 (PIIV…SSED), and 305-365 (ILRS…NLNY). Positions 29–51 (DHVKKEEQNGLDTIKEEIENKIE) are enriched in basic and acidic residues. The stretch at 32–85 (KKEEQNGLDTIKEEIENKIENEEEEEKIEEKPIEKVEEEKIIVQKEEEEKIEEE) forms a coiled coil. A compositionally biased stretch (acidic residues) spans 80–89 (EKIEEEPIEK). A compositionally biased stretch (polar residues) spans 103–120 (DNINTTVEAKTLETSTEP). A coiled-coil region spans residues 158–208 (EQQEQQEKQKEETKPSIREEVKEKIKGKLSEIKEEIKDIKEEIKHVIREEV). Positions 162-187 (QQEKQKEETKPSIREEVKEKIKGKLS) are enriched in basic and acidic residues. Positions 220–229 (SPPPPPPPPS) are enriched in pro residues. Low complexity predominate over residues 230-258 (ITVQSSSPVSSQISSPVSSPVSSPKPSVT). Positions 305-320 (ILRSKSSPNPGANNPN) are enriched in polar residues. Residues 326 to 365 (NNSSSSSSSNNNSDNNNNSDNNSNNNNINNNNSSSNNLNY) show a composition bias toward low complexity. The Phorbol-ester/DAG-type zinc-finger motif lies at 379 to 427 (YHDFKIHRGTSSCVYCGENTRLWSTSYKCFFCGVVCHKKCLDSMNTIPC). A compositionally biased stretch (low complexity) spans 465 to 534 (PSSITNSSSK…TSISSPPIAS (70 aa)). The interval 465–549 (PSSITNSSSK…PLLQQQQQQQ (85 aa)) is disordered. A coiled-coil region spans residues 541 to 573 (LLQQQQQQQQQQQQQQQQQQQQQQQQQQISTTQ). The 349-residue stretch at 581-929 (SEKPDDDMIN…QISLHKGGFE (349 aa)) folds into the GBD/FH3 domain. Positions 952 to 989 (LNRKLGELEKQNIDKAMKIQEQDINIKSLLDLLKQLKD) form a coiled coil. Disordered regions lie at residues 1009-1092 (MEPP…VPKP), 1466-1508 (EEKR…SDED), and 1526-1561 (RQAK…PNKN). A compositionally biased stretch (low complexity) spans 1017–1033 (SVKSPDDPNNAAPIVVA). In terms of domain architecture, FH1 spans 1019-1081 (KSPDDPNNAA…LGAKKPPAGV (63 aa)). Residues 1034–1070 (PIPPPPPPISGAPPPPPPPPPPMKGGAGPPPPPPPPG) are compositionally biased toward pro residues. The segment covering 1071–1081 (KLGAKKPPAGV) has biased composition (low complexity). An FH2 domain is found at 1086 to 1475 (PPKVPKPSHP…EEKRLQQKQQ (390 aa)). Residues 1398–1491 (LATASTEVEK…RKLTTSNESA (94 aa)) are a coiled coil. Residues 1466–1481 (EEKRLQQKQQRQERAV) show a composition bias toward basic and acidic residues. Composition is skewed to polar residues over residues 1484 to 1498 (LTTS…PNHA) and 1536 to 1561 (HQIA…PNKN). The 31-residue stretch at 1488 to 1518 (NESASASPNHAKSTDDKSDEDDDIVNDLLMA) folds into the DAD domain.

This sequence belongs to the formin homology family. Diaphanous subfamily. As to quaternary structure, interacts (via GBD/FH3 domain) with activated Rho-GTPases.

Functionally, formins play an important role in the nucleation of actin and the formation of linear actin filaments. The protein is Formin-E (forE) of Dictyostelium discoideum (Social amoeba).